Consider the following 201-residue polypeptide: Phospholipase A2 inhibitor NAI (201 aa).

The signal sequence occupies residues 1–19 (MKSLQIICLLFVLVARGSC). 8 disulfide bridges follow: Cys22–Cys47, Cys25–Cys32, Cys40–Cys68, Cys74–Cys95, Cys96–Cys101, Cys119–Cys144, Cys137–Cys166, and Cys170–Cys191. N-linked (GlcNAc...) asparagine glycosylation occurs at Asn176.

Belongs to the CNF-like-inhibitor family. As to quaternary structure, heterotrimer of 2 subunits A and 1 subunit B; non-covalently linked. N-glycosylated, probably by biantennary structure. Glycosylation does not change PLA2 inhibitory activity. Expressed by the liver.

The protein resides in the secreted. Inhibits the enzymatic activity of all phospholipase A2 tested, binding them with micromole to nanomole affinity. In Notechis ater (Black tiger snake), this protein is Phospholipase A2 inhibitor NAI.